The following is a 150-amino-acid chain: Allograft inflammatory factor 1-like (150 aa).

Ser2 carries the post-translational modification N-acetylserine. Ser2 is modified (phosphoserine). In terms of domain architecture, EF-hand 1 spans 47–82 (EKLTAFKEKYMEFDLNNEGEIDLMSLKRMMEKLGVP). Residues Asp60, Asn62, Glu64, and Glu66 each coordinate Ca(2+). In terms of domain architecture, EF-hand 2; degenerate spans 83–117 (KTHLEMKKMISEVTGGVSDTISYRDFVNMMLGKRS). Residues 129–150 (KANESSPKPVGPPPERDIASLP) form a disordered region. At Ser134 the chain carries Phosphoserine.

In terms of assembly, homodimer (Potential). Monomer.

Its subcellular location is the cytoplasm. It localises to the cytoskeleton. It is found in the cell projection. The protein resides in the ruffle membrane. Actin-binding protein that promotes actin bundling. May neither bind calcium nor depend on calcium for function. The sequence is that of Allograft inflammatory factor 1-like (AIF1L) from Homo sapiens (Human).